The chain runs to 81 residues: HssA/B-like protein 5 (81 aa).

Belongs to the hssA/B family.

The chain is HssA/B-like protein 5 (hssl5) from Dictyostelium discoideum (Social amoeba).